A 96-amino-acid polypeptide reads, in one-letter code: Co-chaperonin GroES (96 aa).

It belongs to the GroES chaperonin family. As to quaternary structure, heptamer of 7 subunits arranged in a ring. Interacts with the chaperonin GroEL.

It localises to the cytoplasm. In terms of biological role, together with the chaperonin GroEL, plays an essential role in assisting protein folding. The GroEL-GroES system forms a nano-cage that allows encapsulation of the non-native substrate proteins and provides a physical environment optimized to promote and accelerate protein folding. GroES binds to the apical surface of the GroEL ring, thereby capping the opening of the GroEL channel. This chain is Co-chaperonin GroES, found in Hydrogenobaculum sp. (strain Y04AAS1).